The following is a 683-amino-acid chain: Zinc finger protein 510 (683 aa).

The KRAB domain maps to 46 to 117; sequence VSFKDVTIEF…EEEFSNQSHP (72 aa). The C2H2-type 1; degenerate zinc-finger motif lies at 254–276; the sequence is FECNKIGKAFNDKANCVKHNSSH. 9 C2H2-type zinc fingers span residues 404 to 426, 432 to 454, 460 to 482, 488 to 510, 516 to 538, 544 to 566, 572 to 594, 600 to 622, and 628 to 650; these read YKCNECGKSFCQKGHLIQHQRTH, FECSECGKTFSQKSHLSTHQRIH, YKCNECGKTFVQKSTLRGHQRIH, YECSECGKTFVQKSTLRDHHRIH, FQCNQCGKTFGQKSNLRIHQRTH, YQCNECEKSFWRKDHLIQHQKTH, FKCNECGKTFARTSTLRVHQRIH, FKCNECGKKFVRKAILSDHQRIH, and FQCNKCGKTFGQKSNLRIHQRTH.

Belongs to the krueppel C2H2-type zinc-finger protein family.

The protein resides in the nucleus. Its function is as follows. May be involved in transcriptional regulation. The sequence is that of Zinc finger protein 510 (ZNF510) from Homo sapiens (Human).